The chain runs to 483 residues: UDP-N-acetylmuramate--L-alanine ligase (483 aa).

122-128 (GSHGKTT) is an ATP binding site.

The protein belongs to the MurCDEF family.

The protein resides in the cytoplasm. It catalyses the reaction UDP-N-acetyl-alpha-D-muramate + L-alanine + ATP = UDP-N-acetyl-alpha-D-muramoyl-L-alanine + ADP + phosphate + H(+). It functions in the pathway cell wall biogenesis; peptidoglycan biosynthesis. Cell wall formation. The sequence is that of UDP-N-acetylmuramate--L-alanine ligase from Synechococcus sp. (strain CC9311).